Reading from the N-terminus, the 201-residue chain is Protein GrpE (201 aa).

The segment covering 1-11 (MTDSTNNQGTS) has biased composition (polar residues). Residues 1 to 40 (MTDSTNNQGTSGRPDDDHTTEEVASVFNDPGAQAPAGEPD) are disordered.

This sequence belongs to the GrpE family. Homodimer.

The protein localises to the cytoplasm. In terms of biological role, participates actively in the response to hyperosmotic and heat shock by preventing the aggregation of stress-denatured proteins, in association with DnaK and GrpE. It is the nucleotide exchange factor for DnaK and may function as a thermosensor. Unfolded proteins bind initially to DnaJ; upon interaction with the DnaJ-bound protein, DnaK hydrolyzes its bound ATP, resulting in the formation of a stable complex. GrpE releases ADP from DnaK; ATP binding to DnaK triggers the release of the substrate protein, thus completing the reaction cycle. Several rounds of ATP-dependent interactions between DnaJ, DnaK and GrpE are required for fully efficient folding. This is Protein GrpE from Beijerinckia indica subsp. indica (strain ATCC 9039 / DSM 1715 / NCIMB 8712).